Reading from the N-terminus, the 577-residue chain is Adenine deaminase (577 aa).

Belongs to the metallo-dependent hydrolases superfamily. Adenine deaminase family. The cofactor is Mn(2+).

It catalyses the reaction adenine + H2O + H(+) = hypoxanthine + NH4(+). This chain is Adenine deaminase, found in Geobacillus kaustophilus (strain HTA426).